The chain runs to 298 residues: 4-hydroxy-tetrahydrodipicolinate synthase (298 aa).

A pyruvate-binding site is contributed by T48. Residue Y137 is the Proton donor/acceptor of the active site. The active-site Schiff-base intermediate with substrate is K166. I207 contributes to the pyruvate binding site.

It belongs to the DapA family. Homotetramer; dimer of dimers.

The protein resides in the cytoplasm. It catalyses the reaction L-aspartate 4-semialdehyde + pyruvate = (2S,4S)-4-hydroxy-2,3,4,5-tetrahydrodipicolinate + H2O + H(+). The protein operates within amino-acid biosynthesis; L-lysine biosynthesis via DAP pathway; (S)-tetrahydrodipicolinate from L-aspartate: step 3/4. Its function is as follows. Catalyzes the condensation of (S)-aspartate-beta-semialdehyde [(S)-ASA] and pyruvate to 4-hydroxy-tetrahydrodipicolinate (HTPA). The chain is 4-hydroxy-tetrahydrodipicolinate synthase from Campylobacter jejuni subsp. jejuni serotype O:6 (strain 81116 / NCTC 11828).